The sequence spans 352 residues: Photosystem II D2 protein (352 aa).

The chain crosses the membrane as a helical span at residues 40-60; it reads CAFMALGGWLTGTTFVTSWYT. Residue H117 participates in chlorophyll a binding. The chain crosses the membrane as a helical span at residues 124 to 140; the sequence is GFMLRQFEIARLVGIRP. Positions 129 and 142 each coordinate pheophytin a. A helical membrane pass occupies residues 152–165; sequence VFVSVFLMYPLGQS. Position 197 (H197) interacts with chlorophyll a. A helical membrane pass occupies residues 207-227; the sequence is GALLCAIHGATVENTLFEDSD. 2 residues coordinate a plastoquinone: H214 and F261. H214 contacts Fe cation. H268 provides a ligand contact to Fe cation. The helical transmembrane segment at 278–294 threads the bilayer; it reads GLWMSSVGIVGLALNLR.

The protein belongs to the reaction center PufL/M/PsbA/D family. PSII is composed of 1 copy each of membrane proteins PsbA, PsbB, PsbC, PsbD, PsbE, PsbF, PsbH, PsbI, PsbJ, PsbK, PsbL, PsbM, PsbT, PsbX, PsbY, PsbZ, Psb30/Ycf12, peripheral proteins PsbO, CyanoQ (PsbQ), PsbU, PsbV and a large number of cofactors. It forms dimeric complexes. The D1/D2 heterodimer binds P680, chlorophylls that are the primary electron donor of PSII, and subsequent electron acceptors. It shares a non-heme iron and each subunit binds pheophytin, quinone, additional chlorophylls, carotenoids and lipids. There is also a Cl(-1) ion associated with D1 and D2, which is required for oxygen evolution. The PSII complex binds additional chlorophylls, carotenoids and specific lipids. is required as a cofactor.

It is found in the cellular thylakoid membrane. The enzyme catalyses 2 a plastoquinone + 4 hnu + 2 H2O = 2 a plastoquinol + O2. In terms of biological role, photosystem II (PSII) is a light-driven water:plastoquinone oxidoreductase that uses light energy to abstract electrons from H(2)O, generating O(2) and a proton gradient subsequently used for ATP formation. It consists of a core antenna complex that captures photons, and an electron transfer chain that converts photonic excitation into a charge separation. The D1/D2 (PsbA/PsbD) reaction center heterodimer binds P680, the primary electron donor of PSII as well as several subsequent electron acceptors. D2 is needed for assembly of a stable PSII complex. The chain is Photosystem II D2 protein from Picosynechococcus sp. (strain ATCC 27264 / PCC 7002 / PR-6) (Agmenellum quadruplicatum).